A 420-amino-acid chain; its full sequence is MALLFGIGYVLIIFEESLSFSKSGIALLMAVSLWVVRSIETSVEIVTLELQHATSEVSQIVFYMLGAMTIVEIIDAHQGFKLVTDCITSRKPKILLWVIGFATFFLSSVLDNLTSTIVMVSLLRRLIPPSEYRKLLGAVVVIAANAGGAWTPIGDVTTTMLWIHGHISTFSTIKNLFLPSAISLVVPLALMSLTSEVHGMGLNTPPTPLLAYDRSAPRGKLVFGVGFGALLFVPLFKSLTGLPPYMGILLGLGVIWILTDVIHYGDLERQHLKLPHALSRIDSQGALFFLGILLSMSSLDAAGILKVIANYLDAHIANVELIASIIGVVSAIIDNVPLVAATMGMYDLSTFPQDSEFWQLISFCAGTGGSMLITGSAAGVIFMSMEKVNFFWYFRKVSGFAFAGFTAGIMTYLAVHNFPL.

11 helical membrane passes run 25–45 (IALLMAVSLWVVRSIETSVEI), 60–80 (IVFYMLGAMTIVEIIDAHQGF), 94–114 (ILLWVIGFATFFLSSVLDNLT), 136–156 (LGAVVVIAANAGGAWTPIGDV), 173–193 (IKNLFLPSAISLVVPLALMSL), 221–241 (LVFGVGFGALLFVPLFKSLTG), 242–262 (LPPYMGILLGLGVIWILTDVI), 285–305 (GALFFLGILLSMSSLDAAGIL), 321–341 (LIASIIGVVSAIIDNVPLVAA), 363–383 (FCAGTGGSMLITGSAAGVIFM), and 400–420 (FAFAGFTAGIMTYLAVHNFPL).

The protein belongs to the NhaD Na(+)/H(+) (TC 2.A.62) antiporter family.

The protein resides in the membrane. Na(+)/H(+) antiporter that extrudes sodium in exchange for external protons. This is Sodium/proton antiporter 2 from Arabidopsis thaliana (Mouse-ear cress).